Consider the following 625-residue polypeptide: MALPTAQPLLGSCGSPICSRSFLLLLLSLGWLPLLQTQTTRTSQEAALLHAVTGTVDFASLPTGLFLGLMCDEVSGLSMGHAKELAMAVRQKNIVLQVHQLRCLARRLPKHLTNEELDALPLDLLLFLNPAMFPGQQACAHFFSLISKANVNVLPRRSLERQRLLTGALKCQGVYGFQVSETDARALGGLACDLPGEFVAKSSEVLLPWLARCGGPLDQGQAKAVREVLRSGRAPYGPPSTWSVSTLDALQGLLVVLDESIVHSIPKDVITEWLQGISREPSRLGSKWTVTHPRFRRDTEQKACPPGKEPNVVDENLIFYQNWELEACVDGTLLAGQMDLVNEIPFTYEQLSIFKHKLDKTYPQGYPESLIKQLGHFFRYVSPEDIRQWNVTSPDTVNTLLKVSKGQKMDAQVIALVACYLRGGGKLDEDIVKALDNIPLSYLCDFSPQDLHAIPSSVMWLVGLHDLDKCSQRHLGILYQKACSAFQNVSGLEYFEKIRTFLGGASREDLRALSQHNVSMDIATFKKLQVDALVGLSVAEVQKLLGPHIGDLKTEEDKSPVRDWLFRQQQKDLDSLGLGLQGGIPNGYLILDFNVREAFSSGAPLLGPGFVFAWIPALLSALRLS.

Positions M1 to L35 are cleaved as a signal peptide. The residue at position 202 (S202) is a Phosphoserine. A disulfide bridge links C304 with C328. N-linked (GlcNAc...) asparagine glycans are attached at residues N390, N488, and N517. S600 carries the GPI-anchor amidated serine lipid modification. Positions S601–S625 are cleaved as a propeptide — removed in mature form.

Belongs to the mesothelin family. In terms of assembly, interacts with MUC16. In terms of processing, proteolytically cleaved by a furin-like convertase to generate megakaryocyte-potentiating factor (MPF), and the cleaved form of mesothelin. In terms of tissue distribution, specifically expressed in lung. Overexpressed in hereditary renal carcinoma developed by Eker rats.

The protein resides in the cell membrane. Its subcellular location is the golgi apparatus. It is found in the secreted. Membrane-anchored forms may play a role in cellular adhesion. In terms of biological role, megakaryocyte-potentiating factor (MPF) may potentiate megakaryocyte colony formation. The sequence is that of Mesothelin (Msln) from Rattus norvegicus (Rat).